The primary structure comprises 123 residues: MPTIQQLIRKPRQPKIKRSKSMHLQECPQKRGVCTRVYTTTPKKPNSAMRKVAKVRLTNGFEVISYIPGESHNLQEHSVVLIRGGRVKDLPGVRYHILRGVLDTQGVKDRKQRRSKYGAKRPK.

Residues 1–27 (MPTIQQLIRKPRQPKIKRSKSMHLQEC) form a disordered region. Basic residues predominate over residues 9–21 (RKPRQPKIKRSKS). Asp89 is subject to 3-methylthioaspartic acid.

The protein belongs to the universal ribosomal protein uS12 family. As to quaternary structure, part of the 30S ribosomal subunit. Contacts proteins S8 and S17. May interact with IF1 in the 30S initiation complex.

With S4 and S5 plays an important role in translational accuracy. In terms of biological role, interacts with and stabilizes bases of the 16S rRNA that are involved in tRNA selection in the A site and with the mRNA backbone. Located at the interface of the 30S and 50S subunits, it traverses the body of the 30S subunit contacting proteins on the other side and probably holding the rRNA structure together. The combined cluster of proteins S8, S12 and S17 appears to hold together the shoulder and platform of the 30S subunit. The polypeptide is Small ribosomal subunit protein uS12 (Roseobacter denitrificans (strain ATCC 33942 / OCh 114) (Erythrobacter sp. (strain OCh 114))).